The sequence spans 387 residues: Acyl-[acyl-carrier-protein] 6-desaturase (387 aa).

Residues 1-29 (MALVFKSIGAHKTPPCTLNLASPALYHTR) constitute a chloroplast transit peptide. Fe cation is bound by residues E131, E169, H172, E222, E255, and H258.

This sequence belongs to the fatty acid desaturase type 2 family. Fe(2+) serves as cofactor.

The protein localises to the plastid. The protein resides in the chloroplast. The enzyme catalyses hexadecanoyl-[ACP] + 2 reduced [2Fe-2S]-[ferredoxin] + O2 + 2 H(+) = (6Z)-hexadecenoyl-[ACP] + 2 oxidized [2Fe-2S]-[ferredoxin] + 2 H2O. It functions in the pathway lipid metabolism; fatty acid metabolism. Its activity is regulated as follows. Inhibited by KCN or H(2)O(2). Its function is as follows. Delta(6) fatty acid desaturase introducing a cis double bond at carbon 6 of palmitoyl-[acyl-carrier protein](16:0-ACP), producing 16:1(6Z)-ACP. No activity with the coenzyme A ester of the fatty acid. The position of the double bond is determined by its distance from the carboxyl end of the fatty acid. Low activity with several saturated acyl-[acyl-carrier protein]s, including 14:0-ACP and 18:0-ACP. Requires reduced ferredoxin for detectable in vitro activity. This is Acyl-[acyl-carrier-protein] 6-desaturase from Thunbergia alata (Black-eyed Susan vine).